Reading from the N-terminus, the 82-residue chain is Putative membrane protein insertion efficiency factor (82 aa).

The segment at 63-82 is disordered; that stretch reads PGGHDPVPESTILSKEKSVK.

Belongs to the UPF0161 family.

Its subcellular location is the cell inner membrane. Could be involved in insertion of integral membrane proteins into the membrane. The sequence is that of Putative membrane protein insertion efficiency factor from Protochlamydia amoebophila (strain UWE25).